The sequence spans 73 residues: Translation initiation factor IF-1 (73 aa).

The S1-like domain maps to 1–72 (MSKKDVIELE…SRGRIVYRKK (72 aa)).

It belongs to the IF-1 family. Component of the 30S ribosomal translation pre-initiation complex which assembles on the 30S ribosome in the order IF-2 and IF-3, IF-1 and N-formylmethionyl-tRNA(fMet); mRNA recruitment can occur at any time during PIC assembly.

The protein localises to the cytoplasm. Its function is as follows. One of the essential components for the initiation of protein synthesis. Stabilizes the binding of IF-2 and IF-3 on the 30S subunit to which N-formylmethionyl-tRNA(fMet) subsequently binds. Helps modulate mRNA selection, yielding the 30S pre-initiation complex (PIC). Upon addition of the 50S ribosomal subunit IF-1, IF-2 and IF-3 are released leaving the mature 70S translation initiation complex. This chain is Translation initiation factor IF-1, found in Fusobacterium nucleatum subsp. nucleatum (strain ATCC 25586 / DSM 15643 / BCRC 10681 / CIP 101130 / JCM 8532 / KCTC 2640 / LMG 13131 / VPI 4355).